A 164-amino-acid chain; its full sequence is Thiol peroxidase (164 aa).

Residues 18 to 163 (INEGDFAPDF…FDAALAAYKN (146 aa)) form the Thioredoxin domain. Cys-60 functions as the Cysteine sulfenic acid (-SOH) intermediate in the catalytic mechanism. Residues Cys-60 and Cys-93 are joined by a disulfide bond.

This sequence belongs to the peroxiredoxin family. Tpx subfamily. As to quaternary structure, homodimer.

The catalysed reaction is a hydroperoxide + [thioredoxin]-dithiol = an alcohol + [thioredoxin]-disulfide + H2O. Its function is as follows. Thiol-specific peroxidase that catalyzes the reduction of hydrogen peroxide and organic hydroperoxides to water and alcohols, respectively. Plays a role in cell protection against oxidative stress by detoxifying peroxides. In Staphylococcus aureus (strain COL), this protein is Thiol peroxidase.